Here is a 388-residue protein sequence, read N- to C-terminus: Reducing end xylose-releasing exo-oligoxylanase (388 aa).

Glutamate 70 acts as the Proton donor in catalysis. Aspartate 263 acts as the Proton acceptor in catalysis.

Belongs to the glycosyl hydrolase 8 (cellulase D) family.

It carries out the reaction Hydrolysis of (1-&gt;4)-beta-D-xylose residues from the reducing end of oligosaccharides.. Hydrolyzes xylooligosaccharides with a degree of polymerization of greater than or equal to 3, releasing xylose from the reducing end. Only hydrolyzes the beta anomers of xylooligosaccharides, with inversion of anomeric configuration. Hydrolyzes the glucose and xylose-based trisaccharides where xylose is located at the -1 subsite, GXX, XXG and GXG. Does not hydrolyze xylan, chitosan, lichenan, curdlan or carboxymethylcellulose. In Halalkalibacterium halodurans (strain ATCC BAA-125 / DSM 18197 / FERM 7344 / JCM 9153 / C-125) (Bacillus halodurans), this protein is Reducing end xylose-releasing exo-oligoxylanase.